Reading from the N-terminus, the 373-residue chain is Peptide chain release factor subunit 1 (373 aa).

It belongs to the eukaryotic release factor 1 family. Heterodimer of two subunits, one of which binds GTP.

Its subcellular location is the cytoplasm. Directs the termination of nascent peptide synthesis (translation) in response to the termination codons UAA, UAG and UGA. This is Peptide chain release factor subunit 1 (prf1) from Aeropyrum pernix (strain ATCC 700893 / DSM 11879 / JCM 9820 / NBRC 100138 / K1).